The primary structure comprises 446 residues: NADH-ubiquinone oxidoreductase chain 4 (446 aa).

A run of 13 helical transmembrane segments spans residues 4–24, 56–76, 93–113, 114–134, 141–161, 182–202, 212–232, 245–265, 272–292, 297–317, 330–350, 373–393, and 426–446; these read IILF…YWMV, MLSY…LLAS, IVIL…FMFY, LFFE…GYQP, VYLL…IFYV, LLYF…LVHL, PVSG…YGLL, YSFV…LVCL, ALIA…LLTM, LCGS…LFCL, MLIN…WFLL, IVSW…FSAA, and LLHW…ILWL.

Belongs to the complex I subunit 4 family.

It localises to the mitochondrion membrane. The enzyme catalyses a ubiquinone + NADH + 5 H(+)(in) = a ubiquinol + NAD(+) + 4 H(+)(out). Core subunit of the mitochondrial membrane respiratory chain NADH dehydrogenase (Complex I) that is believed to belong to the minimal assembly required for catalysis. Complex I functions in the transfer of electrons from NADH to the respiratory chain. The immediate electron acceptor for the enzyme is believed to be ubiquinone. The sequence is that of NADH-ubiquinone oxidoreductase chain 4 (mt:ND4) from Drosophila yakuba (Fruit fly).